The chain runs to 233 residues: Ribose-5-phosphate isomerase A (233 aa).

Substrate-binding positions include 31 to 34 (SGST), 87 to 90 (DGAD), and 100 to 103 (KGGG). The active-site Proton acceptor is Glu109. Lys127 provides a ligand contact to substrate.

This sequence belongs to the ribose 5-phosphate isomerase family. As to quaternary structure, homodimer.

It catalyses the reaction aldehydo-D-ribose 5-phosphate = D-ribulose 5-phosphate. The protein operates within carbohydrate degradation; pentose phosphate pathway; D-ribose 5-phosphate from D-ribulose 5-phosphate (non-oxidative stage): step 1/1. Catalyzes the reversible conversion of ribose-5-phosphate to ribulose 5-phosphate. The protein is Ribose-5-phosphate isomerase A of Chlamydia caviae (strain ATCC VR-813 / DSM 19441 / 03DC25 / GPIC) (Chlamydophila caviae).